Here is a 484-residue protein sequence, read N- to C-terminus: ATP-dependent RNA helicase DDX25 (484 aa).

At threonine 49 the chain carries Phosphothreonine. Positions 62 to 75 (LAANSLLNKLIRQS) match the Nuclear export signal motif. Positions 98-126 (KTFEELRLKEELLKGIYAMGFNRPSKIQE) match the Q motif motif. Positions 101-115 (EELRLKEELLKGIYA) match the Nuclear localization signal motif. Residues 131–301 (MMLAHPPQNL…ERIIPDPNVI (171 aa)) form the Helicase ATP-binding domain. 144 to 151 (SQSGTGKT) serves as a coordination point for ATP. The DEAD box signature appears at 248–251 (DEAD). Residues 312–479 (NIRQYYVLCE…QLDPEDMDEI (168 aa)) enclose the Helicase C-terminal domain.

Belongs to the DEAD box helicase family. Post-translationally, phosphorylated on threonine residues. The phosphorylated form is found in the cytoplasm but not in the nucleus. As to expression, isoform 1 is expressed in germ cells. Isoform 2 is expressed in Leydig cells and in round spermatids of adult testis upon gonadotropin stimulation.

It is found in the cytoplasm. It localises to the nucleus. The catalysed reaction is ATP + H2O = ADP + phosphate + H(+). Its function is as follows. ATP-dependent RNA helicase. Required for mRNA export and translation regulation during spermatid development. This chain is ATP-dependent RNA helicase DDX25 (Ddx25), found in Mus musculus (Mouse).